The chain runs to 403 residues: Deubiquitinase and deneddylase Dub1 (403 aa).

Residues 1 to 11 (MLSPTNSTSKT) are compositionally biased toward polar residues. The segment at 1-24 (MLSPTNSTSKTAPVPPRDSSKPVL) is disordered. The helical transmembrane segment at 40–60 (TALAVLLVVVTLGLILLFYSF) threads the bilayer. A disordered region spans residues 77-132 (KEQPTISIPVPLPSPPLAVPRPSTPPAPTPAISRPSTPSAPKPSTPPPLLPKAPKP). Composition is skewed to pro residues over residues 86 to 105 (VPLP…PAPT) and 114 to 130 (PSAP…PKAP). Residues H277, D294, and C347 contribute to the active site.

This sequence belongs to the peptidase C48 family.

The protein localises to the secreted. The protein resides in the host cell. It is found in the membrane. In terms of biological role, effector proteins function to alter host cell physiology and promote bacterial survival in host tissues. This protease possesses deubiquitinating and deneddylating activities. The sequence is that of Deubiquitinase and deneddylase Dub1 (cdu1) from Chlamydia trachomatis serovar L2b (strain UCH-1/proctitis).